The following is a 940-amino-acid chain: Mitogen-activated protein kinase kinase kinase 10 (940 aa).

The 66-residue stretch at 16–81 folds into the SH3 domain; sequence PAGPVWTAVF…PSNYVAPAAP (66 aa). The 263-residue stretch at 98-360 folds into the Protein kinase domain; sequence LQLEEIIGVG…GSILKQLEVI (263 aa). Residues 104–112 and lysine 125 each bind ATP; that span reads IGVGGFGKV. Aspartate 222 functions as the Proton acceptor in the catalytic mechanism. Threonine 258 bears the Phosphothreonine; by autocatalysis mark. Phosphoserine; by autocatalysis and MAP4K1 is present on serine 262. Leucine-zipper stretches follow at residues 384–405 and 419–440; these read IQHMFDDLRTKEKELRSREEEL and LRRREQELAEREMDIVERELHL. Disordered stretches follow at residues 490–599, 687–734, and 749–917; these read PTLD…MAPG, RAGD…GLAP, and STRS…QPTL. Phosphoserine occurs at positions 498, 502, and 506. The span at 501–511 shows a compositional bias: low complexity; that stretch reads ASPPASPSIIP. A Phosphothreonine modification is found at threonine 552. Basic and acidic residues-rich tracts occupy residues 560 to 572 and 687 to 698; these read QKERAGGEERLKA and RAGDGEEQRRWL. Positions 765–775 are enriched in pro residues; it reads APSPPPSPLAP. Residues 822–840 show a composition bias toward basic and acidic residues; that stretch reads LRQREPLELTNHGPRDPLD. Arginine 843 carries the post-translational modification Omega-N-methylarginine. Residues 899 to 913 are compositionally biased toward pro residues; sequence PSRPDTPESPGPPSV.

Belongs to the protein kinase superfamily. STE Ser/Thr protein kinase family. MAP kinase kinase kinase subfamily. Homodimer. Interacts with SH3RF2. Mg(2+) is required as a cofactor. In terms of processing, autophosphorylation on serine and threonine residues within the activation loop plays a role in enzyme activation.

It carries out the reaction L-seryl-[protein] + ATP = O-phospho-L-seryl-[protein] + ADP + H(+). It catalyses the reaction L-threonyl-[protein] + ATP = O-phospho-L-threonyl-[protein] + ADP + H(+). Its activity is regulated as follows. Homodimerization via the leucine zipper domains is required for autophosphorylation and subsequent activation. Activates the JUN N-terminal pathway. This Mus musculus (Mouse) protein is Mitogen-activated protein kinase kinase kinase 10 (Map3k10).